We begin with the raw amino-acid sequence, 2667 residues long: eIF-2-alpha kinase activator GCN1 (2667 aa).

HEAT repeat units lie at residues 19–56 (DSFYSEIKELEKSIQSNKLSERKNTLTRINSIGKHELS), 95–132 (QWIFSLVQSLKQLFKDISSATNTSLVTDELKINIVKFT), 159–198 (SFSLVLLNYFIDQIQSNSDLTTLLFAAQELLYRELTLQHM), 293–330 (DLQSIILPPLSRHIKRDQDQVFKILIFILENLSSDFNV), 336–375 (LLKSMLLPMLLPVIQSTISIEENRKLLKKTFTLIIERSKD), 398–439 (SQKL…SISI), 466–503 (ELPEQTIKIITNSLKNDDDIIKGQVILSLSKSLGPEAN), and 794–832 (LLNEELVKLMVKALSYEPVLAITQQQWSIYHTLPTELFV). Residues 842–879 (RNDRKVKPKTAEEQRDEESRKRIEEKKKIQSGELEKQE) form a disordered region. HEAT repeat units lie at residues 929 to 967 (PIIVALLQLMKHEITNHQFTQVFEKLICCVPSRFKLDRS), 985 to 1024 (LSEIQILGFIQKILTHIRESIAKEALSGFAFNYFWPIIKN), 1085 to 1122 (GVETSDIGELMEGIISKHVQVRSICLQAIEKIPSIYSP), 1199 to 1237 (HMIPEIVDNLFEIYEQNYPDEIRETPITSKFRISVATAL), 1290 to 1330 (GELL…HMDA), 1333 to 1370 (PKVSIVIDKLVDALSIPSESVQVGISKCIAQLIPSFKK), 1371 to 1407 (QGDRLIPMLLEKLKNSSGNYADRRGAAFGLAGSVKGL), 1412 to 1450 (LKNYSILDTLQSYIEDKKHPTSRQGALFAFECLCNTIGR), 1454 to 1491 (PYIIHILPKLLVCFGDNVSEVRDATADTAKAIMSQLSG), 1492 to 1529 (HGVKIVLPALLKALDDRSWRTKEGSIELLGAMAFCAPK), 1533 to 1570 (SCLPTIVPKLTYVLNDTHTKVQEAAKEALSHIGSVIRN), 1572 to 1608 (EIQIHVPLLLQTYDDPEIHSKELLENLLSTNYVHTID), 1610 to 1647 (ASLSLLLPILERTLKERSSELKKMSCQIVGNLCSLTEP), 1652 to 1689 (PYLNILMPVMKTVLLDPIPEVRAICARALGLLVRGMGE), 1691 to 1728 (NFSTLIPWLLETVKSDQGAVERSGAAQGLSEVLASLDI), 1729 to 1766 (SRFNSLINELLAMTNSPRPHVREGILSIFIFTPISLGD), 1770 to 1807 (PYLPKVLPQVLKGLADDSDPVREVCMRCGQSIVLQFAV), and 1809 to 1845 (GIEVIVPALEKVLFHENWRIRLSCVQLFGDLLFKLAG). The segment at 1853 to 1875 (SNNSSYNAKDDDDDEPGSSGNDI) is disordered. HEAT repeat units follow at residues 1882–1919 (ERLGRILSSLYMMRFDNNSSVRQKVLLIWKYIVSNTPK), 1923–1960 (EILPTLIEMIISSIGSNNVEKRQISAKTLGDIVSKLSD), 1962–1998 (ILPEILPILERGLRSELEETRQGVCIGLSEVISSAKT), 2002–2039 (PYLSSVVTCITKALCDPLIDVREAAAKAFDHLYHTFGS), 2040–2078 (KASNEILPQLIQLLDNSNNKDLAGYALDGLRQVILVRSS), 2080–2110 (VLPVLIPKLLSRPISTSNVTALSSLAADAGE), 2114–2152 (VHLSTIIPSLIESFTNPNTISNAKEIKEAAVSICKSIDE), 2154–2190 (GWDTLIGLLIEQTEIRLPNIRLGACELIGEFYNGNTM), 2193–2230 (EYPEELLLSLLSLFNDPDALVQQAANNALGFITKSLKK), and 2264–2301 (KGLASVLPVLISGLMYGTSDQREQATNTLRTVINHTSA). The RWDBD region stretch occupies residues 2265–2412 (GLASVLPVLI…ISQESKLRAL (148 aa)). An HEAT 37; degenerate repeat occupies 2326-2348 (QVKSAILQTLSLLISKSPASMKI). The stretch at 2349–2385 (FLHQLQPTFIKCLSDSHKNVRTNAASALGLLMTLSSS) is one HEAT 38; degenerate repeat. 4 HEAT repeats span residues 2387-2421 (DQLVNSLITGISTADSISQESKLRALQSIFEKKPK), 2425-2462 (ATLDKAIATIVDFLYQPSDDLRSMVAQTIGASSKCFTS), 2508-2545 (PNMPTIIKIIQTDCRDEKGPIRESSAYLAEAILVASPL), and 2546-2583 (TYAKDLVPSICHLIGDQSSSVSISALNVIKRFCKSNQQ).

It belongs to the GCN1 family. Interacts with eif2ak4/gcn2; this interaction stimulates the eif2ak4/gcn2 kinase activity and is impaired by impact upon a variety of stress conditions, such as amino acid depletion, UV-C irradiation, proteasome inhibitor treatment and glucose deprivation. Interacts with impact; this prevents the interaction of gcn1 with eif2ak4/gcn2 and inhibits eif2ak4/gcn2 kinase activity.

It is found in the cytoplasm. Its function is as follows. Ribosome collision sensor that activates a translation quality control pathway when a ribosome has stalled during translation. Directly binds to the ribosome and acts as a sentinel for colliding ribosomes. Gcn1 also acts as a positive activator of the integrated stress response (ISR) by mediating activation of eif2ak4/gcn2 in response to amino acid starvation. Interaction with eif2ak4/gcn2 on translating ribosomes stimulates eif2ak4/gcn2 kinase activity, leading to phosphorylation of eukaryotic translation initiation factor 2 (eIF-2-alpha/eif2s1). EIF2S1/eIF-2-alpha phosphorylation converts EIF2S1/eIF-2-alpha into a global protein synthesis inhibitor, leading to a global attenuation of cap-dependent translation, and thus to a reduced overall utilization of amino acids, while concomitantly initiating the preferential translation of ISR-specific mRNAs, such as the transcriptional activator atf4, and hence allowing atf4-mediated reprogramming of amino acid biosynthetic gene expression to alleviate nutrient depletion. The sequence is that of eIF-2-alpha kinase activator GCN1 from Dictyostelium discoideum (Social amoeba).